A 953-amino-acid chain; its full sequence is ATP-dependent 6-phosphofructokinase (953 aa).

An N-terminal catalytic PFK domain 1 region spans residues Met-1 to Ser-558. Residues Gly-193, Arg-256–Cys-257, and Gly-286–Ser-289 each bind ATP. A Mg(2+)-binding site is contributed by Asp-287. Substrate-binding positions include Ser-332–Asp-334, Arg-369, Met-376–Arg-378, Glu-433, Arg-460, and His-466–Arg-469. Asp-334 acts as the Proton acceptor in catalysis. The interdomain linker stretch occupies residues Ala-559–Leu-572. The interval Arg-573 to Cys-953 is C-terminal regulatory PFK domain 2. Residues Arg-645, Thr-702–Asn-706, Arg-740, Gln-747–Gly-749, Glu-807, Arg-833, His-839–Gln-842, and Arg-906 each bind beta-D-fructose 2,6-bisphosphate.

It belongs to the phosphofructokinase type A (PFKA) family. ATP-dependent PFK group I subfamily. Eukaryotic two domain clade 'E' sub-subfamily. As to quaternary structure, heterooctamer of 4 alpha and 4 beta chains. The cofactor is Mg(2+).

The protein localises to the cytoplasm. It catalyses the reaction beta-D-fructose 6-phosphate + ATP = beta-D-fructose 1,6-bisphosphate + ADP + H(+). The protein operates within carbohydrate degradation; glycolysis; D-glyceraldehyde 3-phosphate and glycerone phosphate from D-glucose: step 3/4. Its activity is regulated as follows. Allosterically activated by ADP, AMP, or fructose 2,6-bisphosphate, and allosterically inhibited by ATP or citrate. Its function is as follows. Catalyzes the phosphorylation of D-fructose 6-phosphate to fructose 1,6-bisphosphate by ATP, the first committing step of glycolysis. The sequence is that of ATP-dependent 6-phosphofructokinase (PFK1) from Yarrowia lipolytica (strain CLIB 122 / E 150) (Yeast).